The sequence spans 568 residues: Proline--tRNA ligase (568 aa).

The protein belongs to the class-II aminoacyl-tRNA synthetase family. ProS type 1 subfamily. In terms of assembly, homodimer.

Its subcellular location is the cytoplasm. The catalysed reaction is tRNA(Pro) + L-proline + ATP = L-prolyl-tRNA(Pro) + AMP + diphosphate. Catalyzes the attachment of proline to tRNA(Pro) in a two-step reaction: proline is first activated by ATP to form Pro-AMP and then transferred to the acceptor end of tRNA(Pro). As ProRS can inadvertently accommodate and process non-cognate amino acids such as alanine and cysteine, to avoid such errors it has two additional distinct editing activities against alanine. One activity is designated as 'pretransfer' editing and involves the tRNA(Pro)-independent hydrolysis of activated Ala-AMP. The other activity is designated 'posttransfer' editing and involves deacylation of mischarged Ala-tRNA(Pro). The misacylated Cys-tRNA(Pro) is not edited by ProRS. The polypeptide is Proline--tRNA ligase (Listeria monocytogenes serotype 4a (strain HCC23)).